The following is a 61-amino-acid chain: MAVQQNRKSRSRRDMRRSHDALTENALTVDQTTGETHRRHHVTKDGIYRGRQLFAKAADAE.

The interval 1-44 (MAVQQNRKSRSRRDMRRSHDALTENALTVDQTTGETHRRHHVTK) is disordered. The span at 7 to 16 (RKSRSRRDMR) shows a compositional bias: basic residues. The segment covering 25–34 (NALTVDQTTG) has biased composition (polar residues).

It belongs to the bacterial ribosomal protein bL32 family.

The polypeptide is Large ribosomal subunit protein bL32 (Acinetobacter baylyi (strain ATCC 33305 / BD413 / ADP1)).